Consider the following 77-residue polypeptide: Large ribosomal subunit protein bL31 (77 aa).

Residues Cys-16, Cys-18, Cys-37, and Cys-40 each contribute to the Zn(2+) site.

It belongs to the bacterial ribosomal protein bL31 family. Type A subfamily. As to quaternary structure, part of the 50S ribosomal subunit. Zn(2+) is required as a cofactor.

Binds the 23S rRNA. The chain is Large ribosomal subunit protein bL31 from Pseudomonas fluorescens (strain SBW25).